The following is a 458-amino-acid chain: Cysteine--tRNA ligase (458 aa).

Cysteine 28 provides a ligand contact to Zn(2+). The 'HIGH' region motif lies at 30–40 (VTVYDLCHFGH). Zn(2+) contacts are provided by cysteine 209, histidine 234, and glutamate 238. A 'KMSKS' region motif is present at residues 266-270 (KMSKS). Position 269 (lysine 269) interacts with ATP.

The protein belongs to the class-I aminoacyl-tRNA synthetase family. In terms of assembly, monomer. Requires Zn(2+) as cofactor.

It localises to the cytoplasm. It carries out the reaction tRNA(Cys) + L-cysteine + ATP = L-cysteinyl-tRNA(Cys) + AMP + diphosphate. This chain is Cysteine--tRNA ligase, found in Mannheimia succiniciproducens (strain KCTC 0769BP / MBEL55E).